The chain runs to 607 residues: Tyrosine-protein kinase RYK (607 aa).

The tract at residues 1–20 (MRGAARLGRPGRSCLPGARG) is disordered. A signal peptide spans 1–25 (MRGAARLGRPGRSCLPGARGLRAPP). Over 26 to 227 (PPPLLLLLAL…VHAAPTTSTR (202 aa)) the chain is Extracellular. One can recognise a WIF domain in the interval 66 to 194 (LYLSEDEVRR…VLNFKRRKMC (129 aa)). Residues Asn139, Asn174, Asn178, Asn182, and Asn209 are each glycosylated (N-linked (GlcNAc...) asparagine). The cysteines at positions 159 and 194 are disulfide-linked. Residues 228–248 (VFYISVGVCCAVIFLVAIILA) form a helical membrane-spanning segment. At 249-607 (VLHLHSMKRI…EFHAALGAYV (359 aa)) the chain is on the cytoplasmic side. Residues 266–282 (ASSSSQGLSQPSTQTTQ) are compositionally biased toward low complexity. Residues 266-290 (ASSSSQGLSQPSTQTTQYLRADTPN) form a disordered region. Residues 330-603 (ITLKDVLQEG…QCLTEFHAAL (274 aa)) form the Protein kinase domain. Residues 336 to 344 (LQEGTFGRI) and Lys364 contribute to the ATP site. The Proton acceptor role is filled by Asp465. At Tyr495 the chain carries Phosphotyrosine; by autocatalysis.

The protein belongs to the protein kinase superfamily. Tyr protein kinase family. As to quaternary structure, interacts with DVL1 (via PDZ domain). In terms of processing, proteolytically cleaved, in part by presenilin, in response to WNT3 stimulation. Cleavage occurs during neuronal differentiation. As to expression, observed in all the tissues examined.

The protein localises to the membrane. It is found in the nucleus. It localises to the cytoplasm. It catalyses the reaction L-tyrosyl-[protein] + ATP = O-phospho-L-tyrosyl-[protein] + ADP + H(+). Functionally, may be a coreceptor along with FZD8 of Wnt proteins, such as WNT1, WNT3, WNT3A and WNT5A. Involved in neuron differentiation, axon guidance, corpus callosum establishment and neurite outgrowth. In response to WNT3 stimulation, receptor C-terminal cleavage occurs in its transmembrane region and allows the C-terminal intracellular product to translocate from the cytoplasm to the nucleus where it plays a crucial role in neuronal development. The chain is Tyrosine-protein kinase RYK from Homo sapiens (Human).